The chain runs to 337 residues: PGGVCLLLLLLCQFMEDRSAQAGNCWLRQAKNGRCQVLYKTELSKEECCSTGRLSTSWTEEDVNDNTLFKWMIFNGGAPNCIPCKETCENVDCGPGKKCRMNKKNKPRCVCAPDCSNITWKGPVCGLDGKTYRNECALLKARCKEQPELEVQYQGKCKKTCRDVFCPGSSTCVVDQTNNAYCVTCNRICPEPTSSEQYLCGNDGVTYPSACHLRKATCLLGRSIGLAYEGKCIKAKSCEDIQCTGGKKCLWDFKVGRGRCSLCGELCPESKSEEPVCASDNATYASECAMKEAACSSGVLLEVKHSGSCNSISEDTEDEEEDEDQDYSFPISSILEW.

The N-terminal stretch at 1-22 (PGGVCLLLLLLCQFMEDRSAQA) is a signal peptide. Positions 23-96 (GNCWLRQAKN…TCENVDCGPG (74 aa)) constitute a TB domain. Intrachain disulfides connect Cys25/Cys48, Cys35/Cys81, Cys49/Cys84, Cys88/Cys99, Cys93/Cys109, Cys111/Cys143, Cys115/Cys136, Cys125/Cys157, Cys161/Cys172, Cys166/Cys182, Cys185/Cys218, Cys189/Cys211, Cys200/Cys232, Cys238/Cys249, Cys243/Cys260, Cys263/Cys295, Cys267/Cys288, and Cys277/Cys309. In terms of domain architecture, Follistatin-like 1 spans 87–110 (TCENVDCGPGKKCRMNKKNKPRCV). The Kazal-like 1 domain occupies 105-159 (NKPRCVCAPDCSNITWKGPVCGLDGKTYRNECALLKARCKEQPELEVQYQGKCKK). The N-linked (GlcNAc...) asparagine glycan is linked to Asn117. Residues 160–183 (TCRDVFCPGSSTCVVDQTNNAYCV) enclose the Follistatin-like 2 domain. A Kazal-like 2 domain is found at 179–234 (NAYCVTCNRICPEPTSSEQYLCGNDGVTYPSACHLRKATCLLGRSIGLAYEGKCIK). The Follistatin-like 3 domain occupies 237–261 (SCEDIQCTGGKKCLWDFKVGRGRCS). One can recognise a Kazal-like 3 domain in the interval 254-311 (KVGRGRCSLCGELCPESKSEEPVCASDNATYASECAMKEAACSSGVLLEVKHSGSCNS). The N-linked (GlcNAc...) asparagine glycan is linked to Asn281. The interval 309–337 (CNSISEDTEDEEEDEDQDYSFPISSILEW) is disordered. The segment covering 314–326 (EDTEDEEEDEDQD) has biased composition (acidic residues).

As to quaternary structure, monomer.

It is found in the secreted. In terms of biological role, binds directly to activin and functions as an activin antagonist. Specific inhibitor of the biosynthesis and secretion of pituitary follicle stimulating hormone (FSH). In Ovis aries (Sheep), this protein is Follistatin.